The sequence spans 756 residues: U3 small nucleolar RNA-associated protein 14 homolog B (756 aa).

The interval D21 to Q44 is disordered. S29, S31, and S37 each carry phosphoserine. 2 coiled-coil regions span residues S215–K244 and P316–E345. Basic and acidic residues-rich tracts occupy residues K419–D428 and L452–E468. Disordered regions lie at residues K419–E468 and Q497–K539. Residues L449–E476 adopt a coiled-coil conformation. Residue S554 is modified to Phosphoserine.

This sequence belongs to the UTP14 family. Expressed predominantly in germ cells of the testis; weakly expressed in brain.

The protein localises to the nucleus. The protein resides in the nucleolus. Its function is as follows. Essential for spermatogenesis. May be required specifically for ribosome biogenesis and hence protein synthesis during male meiosis. This Mus musculus (Mouse) protein is U3 small nucleolar RNA-associated protein 14 homolog B (Utp14b).